The chain runs to 415 residues: Actin-like protein 7B (415 aa).

The tract at residues 1–31 (MATRNSPMPLGTAQGDPGEAGTRPGPDASLR) is disordered. Ser6 bears the Phosphoserine mark.

It belongs to the actin family. In terms of tissue distribution, detected only in the testis and, to a lesser extent, in the prostate.

It localises to the cytoplasm. Its subcellular location is the cytoskeleton. This chain is Actin-like protein 7B (ACTL7B), found in Homo sapiens (Human).